A 233-amino-acid chain; its full sequence is Putative N-acetylmannosamine-6-phosphate 2-epimerase (233 aa).

Belongs to the NanE family.

The enzyme catalyses an N-acyl-D-glucosamine 6-phosphate = an N-acyl-D-mannosamine 6-phosphate. It functions in the pathway amino-sugar metabolism; N-acetylneuraminate degradation; D-fructose 6-phosphate from N-acetylneuraminate: step 3/5. Its function is as follows. Converts N-acetylmannosamine-6-phosphate (ManNAc-6-P) to N-acetylglucosamine-6-phosphate (GlcNAc-6-P). In Yersinia pseudotuberculosis serotype O:3 (strain YPIII), this protein is Putative N-acetylmannosamine-6-phosphate 2-epimerase.